Consider the following 231-residue polypeptide: 5'-methylthioadenosine/S-adenosylhomocysteine nucleosidase (231 aa).

Glu-12 functions as the Proton acceptor in the catalytic mechanism. Substrate-binding positions include Gly-78, Met-153, and 174–175; that span reads ME. Asp-198 acts as the Proton donor in catalysis.

This sequence belongs to the PNP/UDP phosphorylase family. MtnN subfamily.

The catalysed reaction is S-adenosyl-L-homocysteine + H2O = S-(5-deoxy-D-ribos-5-yl)-L-homocysteine + adenine. The enzyme catalyses S-methyl-5'-thioadenosine + H2O = 5-(methylsulfanyl)-D-ribose + adenine. It carries out the reaction 5'-deoxyadenosine + H2O = 5-deoxy-D-ribose + adenine. It functions in the pathway amino-acid biosynthesis; L-methionine biosynthesis via salvage pathway; S-methyl-5-thio-alpha-D-ribose 1-phosphate from S-methyl-5'-thioadenosine (hydrolase route): step 1/2. Functionally, catalyzes the irreversible cleavage of the glycosidic bond in both 5'-methylthioadenosine (MTA) and S-adenosylhomocysteine (SAH/AdoHcy) to adenine and the corresponding thioribose, 5'-methylthioribose and S-ribosylhomocysteine, respectively. Also cleaves 5'-deoxyadenosine, a toxic by-product of radical S-adenosylmethionine (SAM) enzymes, into 5-deoxyribose and adenine. The sequence is that of 5'-methylthioadenosine/S-adenosylhomocysteine nucleosidase from Bacillus pumilus (strain SAFR-032).